The primary structure comprises 67 residues: Large ribosomal subunit protein bL31 (67 aa).

The Zn(2+) site is built by Cys-16, Cys-18, Cys-36, and Cys-39.

Belongs to the bacterial ribosomal protein bL31 family. Type A subfamily. Part of the 50S ribosomal subunit. Zn(2+) is required as a cofactor.

Binds the 23S rRNA. In Desulforudis audaxviator (strain MP104C), this protein is Large ribosomal subunit protein bL31.